A 767-amino-acid polypeptide reads, in one-letter code: Two-component response regulator-like PRR73 (767 aa).

Residues 1–64 (MGSACEAGTD…EPQQTDEQKE (64 aa)) form a disordered region. The 119-residue stretch at 82-200 (RVLLVENDDS…ELKNLWQHVW (119 aa)) folds into the Response regulatory domain. The span at 205–214 (SSSGSGSESG) shows a compositional bias: low complexity. Disordered regions lie at residues 205–272 (SSSG…QSSW), 312–388 (RWLP…NEPT), 476–546 (ASNQ…RGKV), 646–701 (ANYS…SGSG), and 727–767 (NFGK…DEDR). Positions 238–252 (DNEDDDDNDEDDDDL) are enriched in acidic residues. 3 stretches are compositionally biased toward polar residues: residues 263 to 272 (DNGSGTQSSW), 343 to 361 (RNSSMEYQSSPREMSVNPT), and 488 to 497 (CSPQDNSSEA). A compositionally biased stretch (low complexity) spans 518–531 (GSNGSSNNNDMGSS). A compositionally biased stretch (polar residues) spans 532 to 543 (TKNAITKPSSNR). Residues 689–700 (GAGGGNGSGSGS) are compositionally biased toward gly residues. The 43-residue stretch at 712–754 (REAALNKFRQKRKVRNFGKKVRYQSRKRLAEQRPRIRGQFVRQ) folds into the CCT domain. A compositionally biased stretch (basic residues) spans 727–738 (NFGKKVRYQSRK).

This sequence belongs to the ARR-like family.

The protein resides in the nucleus. In terms of biological role, controls photoperiodic flowering response. Seems to be one of the component of the circadian clock. Expression of several members of the ARR-like family is controlled by circadian rhythm. The particular coordinated sequential expression of PRR73, PRR37, PRR95, PRR59 and PPR1 result to circadian waves that may be at the basis of the endogenous circadian clock. This chain is Two-component response regulator-like PRR73 (PRR73), found in Oryza sativa subsp. indica (Rice).